A 297-amino-acid chain; its full sequence is Protease HtpX homolog (297 aa).

A run of 2 helical transmembrane segments spans residues I5–I25 and L43–G63. Residue H154 participates in Zn(2+) binding. Residue E155 is part of the active site. H158 provides a ligand contact to Zn(2+). The next 2 helical transmembrane spans lie at L169–A189 and F203–A223. A Zn(2+)-binding site is contributed by E229.

Belongs to the peptidase M48B family. Requires Zn(2+) as cofactor.

Its subcellular location is the cell membrane. The chain is Protease HtpX homolog from Bacillus velezensis (strain DSM 23117 / BGSC 10A6 / LMG 26770 / FZB42) (Bacillus amyloliquefaciens subsp. plantarum).